The primary structure comprises 213 residues: N-(5'-phosphoribosyl)anthranilate isomerase (213 aa).

The protein belongs to the TrpF family.

It catalyses the reaction N-(5-phospho-beta-D-ribosyl)anthranilate = 1-(2-carboxyphenylamino)-1-deoxy-D-ribulose 5-phosphate. The protein operates within amino-acid biosynthesis; L-tryptophan biosynthesis; L-tryptophan from chorismate: step 3/5. The sequence is that of N-(5'-phosphoribosyl)anthranilate isomerase from Rhodopseudomonas palustris (strain TIE-1).